Here is a 31-residue protein sequence, read N- to C-terminus: SETDSRKEGRMGQKNAVIRQWCENDCNYAPK.

It belongs to the scolopendra toxin 1 family. Contains one or more disulfide bonds. As to expression, expressed by the venom gland.

The protein resides in the secreted. In Scolopendra viridicornis nigra (Brazilian giant centipede), this protein is Scolopendra 4610.56 Da toxin.